Reading from the N-terminus, the 39-residue chain is Photosystem II reaction center protein L (39 aa).

The helical transmembrane segment at 18-38 (SLYLGLLVVFTTGILFSSYFF) threads the bilayer.

This sequence belongs to the PsbL family. PSII is composed of 1 copy each of membrane proteins PsbA, PsbB, PsbC, PsbD, PsbE, PsbF, PsbH, PsbI, PsbJ, PsbK, PsbL, PsbM, PsbT, PsbX, PsbY, PsbZ, Psb30/Ycf12, peripheral proteins PsbO, CyanoQ (PsbQ), PsbU, PsbV and a large number of cofactors. It forms dimeric complexes.

The protein resides in the cellular thylakoid membrane. Its function is as follows. One of the components of the core complex of photosystem II (PSII). PSII is a light-driven water:plastoquinone oxidoreductase that uses light energy to abstract electrons from H(2)O, generating O(2) and a proton gradient subsequently used for ATP formation. It consists of a core antenna complex that captures photons, and an electron transfer chain that converts photonic excitation into a charge separation. This subunit is found at the monomer-monomer interface and is required for correct PSII assembly and/or dimerization. The sequence is that of Photosystem II reaction center protein L from Synechococcus sp. (strain WH7803).